A 71-amino-acid polypeptide reads, in one-letter code: MFTLKKPLLVLLFLGTVSLSLCEQERAADDDEGEVIEEEVKRGFMDTAKQVAKNVAVTLIDKLRCKVTGGC.

Residues 1-22 form the signal peptide; it reads MFTLKKPLLVLLFLGTVSLSLC. Positions 23–40 are excised as a propeptide; that stretch reads EQERAADDDEGEVIEEEV. A disulfide bridge connects residues cysteine 65 and cysteine 71.

As to expression, expressed by the skin glands.

It localises to the secreted. Displays broad-spectrum antibacterial activity against a range of Gram-positive and Gram-negative bacteria. Has low hemolytic activity, low cytotoxicity and low antioxidant activity. This is Palustrin-2AJ2 from Amolops jingdongensis (Chinese torrent frog).